The following is a 461-amino-acid chain: MLKIFNTFNRKKELFTPIHPNTVGMYVCGVTIYDLCHIGHARTFVVFDVVARYLRYLGYSLTYVRNITDIDDKIIQRASQNHQSCEALTAQMLKEMYRDFDELNLLRPDLEPRATEHITEMITLTQQLLDQKYAYVAANGDVLFSVEKNPHYGLLSRQNLEQLQAGARVEVMESKHHPMDFVLWKMSKPNEPHWPSPWGEGRPGWHIECSAMNAKALGPHFDIHGGGADLMFPHHENEMAQSICAHKAPYVNCWMHSGMIMINKEKMSKSLNNFCTIRDLLQRYDPETLRYFLLSAHYRSPLNYTEENLKQARIALTRLYTALRDTNQKAFPEGGESFEKRFVSAMNDDFNTPEAYAVLFDTAREINKLKKEHPKAADGLAAQLRKMGKVLGLLESGSLLSLLNPEKDDRHQSAEIADLIEKRNLARAHKNWEEADNARTRLFEMGVVVEDTENGTNWRRR.

Cys28 is a binding site for Zn(2+). The 'HIGH' region motif lies at 30 to 40; sequence VTIYDLCHIGH. Zn(2+) contacts are provided by Cys209, His234, and Glu238. Positions 266 to 270 match the 'KMSKS' region motif; the sequence is KMSKS. Lys269 is an ATP binding site.

Belongs to the class-I aminoacyl-tRNA synthetase family. Monomer. The cofactor is Zn(2+).

The protein localises to the cytoplasm. It catalyses the reaction tRNA(Cys) + L-cysteine + ATP = L-cysteinyl-tRNA(Cys) + AMP + diphosphate. In Hamiltonella defensa subsp. Acyrthosiphon pisum (strain 5AT), this protein is Cysteine--tRNA ligase.